Consider the following 243-residue polypeptide: Toxin CcTX-1 (243 aa).

Residues 1-25 show a composition bias toward basic and acidic residues; sequence SSPEKKNDMSKPGRMRFDNKKEPRS. A disordered region spans residues 1–48; sequence SSPEKKNDMSKPGRMRFDNKKEPRSSAKNSGNGYGCVDVNAGREPLTG.

In terms of processing, contains disulfide bonds. In terms of tissue distribution, nematocytes.

Its subcellular location is the secreted. It localises to the nematocyst. It is found in the target cell membrane. Has potent hemolytic activity. Is lethal to crayfish. Causes cutaneous inflammation in humans. May act as a pore-forming toxin, disrupting normal transmembrane ion concentration gradients in susceptible cells. The protein is Toxin CcTX-1 of Cyanea capillata (Lion's mane jellyfish).